Reading from the N-terminus, the 200-residue chain is Small ribosomal subunit protein uS4 (200 aa).

The region spanning 91-150 is the S4 RNA-binding domain; that stretch reads TRLDNVVYRLGITPTRRSARQLVSHKHITVNGKIVNIPSYALKVGDIIGLTEKTKSSNAI.

Belongs to the universal ribosomal protein uS4 family. Part of the 30S ribosomal subunit. Contacts protein S5. The interaction surface between S4 and S5 is involved in control of translational fidelity.

In terms of biological role, one of the primary rRNA binding proteins, it binds directly to 16S rRNA where it nucleates assembly of the body of the 30S subunit. Functionally, with S5 and S12 plays an important role in translational accuracy. This Amoebophilus asiaticus (strain 5a2) protein is Small ribosomal subunit protein uS4.